The sequence spans 338 residues: Thiamine thiazole synthase (338 aa).

Residues 1-43 form a disordered region; sequence MSPVATESMYKPTTINQTAHQQAMDPLKSKQQSNATVNKPAFK. A compositionally biased stretch (polar residues) spans 11-21; that stretch reads KPTTINQTAHQ. Substrate contacts are provided by residues alanine 91, 112-113, glycine 120, and cysteine 185; that span reads ES. At cysteine 221 the chain carries 2,3-didehydroalanine (Cys). Substrate is bound by residues aspartate 223, histidine 238, methionine 290, and 300–302; that span reads RMG.

This sequence belongs to the THI4 family. In terms of assembly, homooctamer. The cofactor is Fe cation. In terms of processing, during the catalytic reaction, a sulfide is transferred from Cys-221 to a reaction intermediate, generating a dehydroalanine residue. As to expression, highly expressed in haustoria, and only in low amounts in intercellular hyphae. Found in the basal hyphae of the uredia, but not in the pedicels and only at very low levels in uredospores.

It localises to the cytoplasm. The protein resides in the nucleus. The catalysed reaction is [ADP-thiazole synthase]-L-cysteine + glycine + NAD(+) = [ADP-thiazole synthase]-dehydroalanine + ADP-5-ethyl-4-methylthiazole-2-carboxylate + nicotinamide + 3 H2O + 2 H(+). In terms of biological role, involved in biosynthesis of the thiamine precursor thiazole. Catalyzes the conversion of NAD and glycine to adenosine diphosphate 5-(2-hydroxyethyl)-4-methylthiazole-2-carboxylic acid (ADT), an adenylated thiazole intermediate. The reaction includes an iron-dependent sulfide transfer from a conserved cysteine residue of the protein to a thiazole intermediate. The enzyme can only undergo a single turnover, which suggests it is a suicide enzyme. May have additional roles in adaptation to various stress conditions and in DNA damage tolerance. The protein is Thiamine thiazole synthase (THI2) of Uromyces fabae (Rust fungus).